The primary structure comprises 363 residues: Peptide chain release factor 1 (363 aa).

The residue at position 237 (Q237) is an N5-methylglutamine. The segment covering 286–295 (EKRRSAEATT) has biased composition (basic and acidic residues). Residues 286-305 (EKRRSAEATTRRNLVGSGDR) form a disordered region.

Belongs to the prokaryotic/mitochondrial release factor family. Post-translationally, methylated by PrmC. Methylation increases the termination efficiency of RF1.

It localises to the cytoplasm. Functionally, peptide chain release factor 1 directs the termination of translation in response to the peptide chain termination codons UAG and UAA. In Shewanella amazonensis (strain ATCC BAA-1098 / SB2B), this protein is Peptide chain release factor 1.